The sequence spans 300 residues: Hydroxyquinol 1,2-dioxygenase (300 aa).

Positions 167, 200, 224, and 226 each coordinate Fe cation.

It belongs to the intradiol ring-cleavage dioxygenase family. It depends on Fe(3+) as a cofactor.

It catalyses the reaction benzene-1,2,4-triol + O2 = maleylacetate + 2 H(+). It participates in aromatic compound metabolism. It functions in the pathway xenobiotic degradation. Involved in the degradation of para-nitrophenol (4-NP). Catalyzes the conversion of hydroxyquinol to malelylacetate. The polypeptide is Hydroxyquinol 1,2-dioxygenase (npcC) (Rhodococcus opacus (Nocardia opaca)).